A 549-amino-acid chain; its full sequence is Glucose-6-phosphate isomerase (549 aa).

The active-site Proton donor is the Glu-355. Catalysis depends on residues His-386 and Lys-514.

The protein belongs to the GPI family.

It localises to the cytoplasm. The catalysed reaction is alpha-D-glucose 6-phosphate = beta-D-fructose 6-phosphate. It participates in carbohydrate biosynthesis; gluconeogenesis. Its pathway is carbohydrate degradation; glycolysis; D-glyceraldehyde 3-phosphate and glycerone phosphate from D-glucose: step 2/4. Functionally, catalyzes the reversible isomerization of glucose-6-phosphate to fructose-6-phosphate. The polypeptide is Glucose-6-phosphate isomerase (Salmonella paratyphi C (strain RKS4594)).